Here is a 377-residue protein sequence, read N- to C-terminus: Actin depolymerising venom protein gelsolin 1 (377 aa).

An N-terminal signal peptide occupies residues 1 to 26 (MFRQMKLGSLATKLLLACFLVTCTSG). 3 Gelsolin-like repeats span residues 50–133 (FVPV…SEQF), 174–243 (IRVR…SSTS), and 298–368 (EKPL…PTAF).

As to expression, expressed by the venom gland (posterior main gland) (at protein level).

Its subcellular location is the secreted. The protein is Actin depolymerising venom protein gelsolin 1 of Platymeris rhadamanthus (Red spot assassin bug).